Reading from the N-terminus, the 664-residue chain is Delta-like protein C (664 aa).

The N-terminal stretch at M1–S20 is a signal peptide. Over S21–L511 the chain is Extracellular. The DSL domain occupies V154–C198. Disulfide bonds link C156-C165, C169-C181, C189-C198, C203-C214, C207-C220, C222-C231, C234-C245, C240-C251, C253-C262, C269-C281, C275-C291, C293-C302, C309-C320, C314-C329, C331-C340, C347-C358, C352-C368, C370-C379, C386-C397, C391-C406, C408-C417, C424-C435, C429-C444, C446-C455, C462-C473, C467-C482, and C484-C493. N173 carries an N-linked (GlcNAc...) asparagine glycan. EGF-like domains follow at residues T199–D232, E233–N263, and D265–E303. Residues E305 to E341 form the EGF-like 4; calcium-binding domain. 2 consecutive EGF-like domains span residues S343–E380 and K382–E418. The EGF-like 7; calcium-binding domain occupies N420 to R456. The region spanning R458–E494 is the EGF-like 8 domain. Residues I512–V532 traverse the membrane as a helical segment. Residues L533–V664 lie on the Cytoplasmic side of the membrane.

Ubiquitinated by mib, leading to its endocytosis and subsequent degradation. In terms of tissue distribution, strongly expressed in the early retina, where it precedes other delta proteins. Also expressed in cranial ganglia, in sensory epithelia including ear and lateral line and in scattered epidermal cells. In the mesoderm, expression is visible by 50% epiboly; it is expressed subsequently in the tail bud, in stripes in the presomitic mesoderm and in the posterior half of each somite. Also expressed in notochord, blood vessels and pronephros. In contrast to other delta proteins, it is not expressed in the majority of nascent primary neurons. In somites, it marks the posterior part of each formed somite, while deltaD (dld) marks the anterior part.

It is found in the membrane. In terms of biological role, acts as a ligand for Notch receptors and is involved in somitogenesis. Can activate Notch receptors. Required in somite segmentation to keep the oscillations of neighboring presomitic mesoderm cells synchronized. This Danio rerio (Zebrafish) protein is Delta-like protein C (dlc).